The following is a 355-amino-acid chain: Ribosomal RNA large subunit methyltransferase M (355 aa).

S-adenosyl-L-methionine-binding positions include serine 191, 224 to 227, aspartate 243, aspartate 263, and aspartate 279; that span reads APGG. Lysine 308 (proton acceptor) is an active-site residue.

The protein belongs to the class I-like SAM-binding methyltransferase superfamily. RNA methyltransferase RlmE family. RlmM subfamily. In terms of assembly, monomer.

It is found in the cytoplasm. It catalyses the reaction cytidine(2498) in 23S rRNA + S-adenosyl-L-methionine = 2'-O-methylcytidine(2498) in 23S rRNA + S-adenosyl-L-homocysteine + H(+). Catalyzes the 2'-O-methylation at nucleotide C2498 in 23S rRNA. The polypeptide is Ribosomal RNA large subunit methyltransferase M (Stenotrophomonas maltophilia (strain R551-3)).